Reading from the N-terminus, the 454-residue chain is UDP-N-acetylmuramoylalanine--D-glutamate ligase (454 aa).

An ATP-binding site is contributed by 114-120; that stretch reads GTNGKTT.

This sequence belongs to the MurCDEF family.

The protein localises to the cytoplasm. It catalyses the reaction UDP-N-acetyl-alpha-D-muramoyl-L-alanine + D-glutamate + ATP = UDP-N-acetyl-alpha-D-muramoyl-L-alanyl-D-glutamate + ADP + phosphate + H(+). It participates in cell wall biogenesis; peptidoglycan biosynthesis. Its function is as follows. Cell wall formation. Catalyzes the addition of glutamate to the nucleotide precursor UDP-N-acetylmuramoyl-L-alanine (UMA). The polypeptide is UDP-N-acetylmuramoylalanine--D-glutamate ligase (Desulfitobacterium hafniense (strain Y51)).